A 419-amino-acid chain; its full sequence is UDP-N-acetylglucosamine 1-carboxyvinyltransferase (419 aa).

Residue 22–23 (KN) participates in phosphoenolpyruvate binding. Arg-91 is a binding site for UDP-N-acetyl-alpha-D-glucosamine. Catalysis depends on Cys-115, which acts as the Proton donor. Position 115 is a 2-(S-cysteinyl)pyruvic acid O-phosphothioketal (Cys-115). UDP-N-acetyl-alpha-D-glucosamine is bound by residues 120–124 (RPVDL), 160–163 (KVSV), Asp-305, and Val-327.

This sequence belongs to the EPSP synthase family. MurA subfamily.

The protein resides in the cytoplasm. It carries out the reaction phosphoenolpyruvate + UDP-N-acetyl-alpha-D-glucosamine = UDP-N-acetyl-3-O-(1-carboxyvinyl)-alpha-D-glucosamine + phosphate. It functions in the pathway cell wall biogenesis; peptidoglycan biosynthesis. Cell wall formation. Adds enolpyruvyl to UDP-N-acetylglucosamine. This chain is UDP-N-acetylglucosamine 1-carboxyvinyltransferase, found in Salmonella dublin (strain CT_02021853).